Consider the following 260-residue polypeptide: Putative ABC transporter ATP-binding protein SCO3161 (260 aa).

The region spanning 16-246 (LDVSGLAFAY…DDLMRAHRLE (231 aa)) is the ABC transporter domain. ATP is bound at residue 49–56 (GPNGAGKT).

It belongs to the ABC transporter superfamily.

The protein localises to the cell membrane. Functionally, probably part of an ABC transporter complex. Responsible for energy coupling to the transport system. This chain is Putative ABC transporter ATP-binding protein SCO3161, found in Streptomyces coelicolor (strain ATCC BAA-471 / A3(2) / M145).